Here is a 123-residue protein sequence, read N- to C-terminus: Small ribosomal subunit protein uS12 (123 aa).

Aspartate 89 carries the 3-methylthioaspartic acid modification. The tract at residues 104-123 (TAGVQDRRQGRSKYGAKRPK) is disordered. The span at 113–123 (GRSKYGAKRPK) shows a compositional bias: basic residues.

It belongs to the universal ribosomal protein uS12 family. As to quaternary structure, part of the 30S ribosomal subunit. Contacts proteins S8 and S17. May interact with IF1 in the 30S initiation complex.

Functionally, with S4 and S5 plays an important role in translational accuracy. Interacts with and stabilizes bases of the 16S rRNA that are involved in tRNA selection in the A site and with the mRNA backbone. Located at the interface of the 30S and 50S subunits, it traverses the body of the 30S subunit contacting proteins on the other side and probably holding the rRNA structure together. The combined cluster of proteins S8, S12 and S17 appears to hold together the shoulder and platform of the 30S subunit. This is Small ribosomal subunit protein uS12 from Oleidesulfovibrio alaskensis (strain ATCC BAA-1058 / DSM 17464 / G20) (Desulfovibrio alaskensis).